The chain runs to 752 residues: Peptidyl-prolyl cis-trans isomerase G (752 aa).

The region spanning 11–176 (FFDIAINNQP…AEVRILSCGE (166 aa)) is the PPIase cyclophilin-type domain. Basic residues predominate over residues 182–193 (KVKKEEKKRHKS). The disordered stretch occupies residues 182-752 (KVKKEEKKRH…SPGTDEDKSG (571 aa)). The span at 194 to 214 (SSSSSSSDSDSSSDSQSSSES) shows a compositional bias: low complexity. A compositionally biased stretch (basic residues) spans 226 to 251 (RKRKKKHRKNSRKHKKEKKKRKKSKK). A phosphoserine mark is found at S252, S254, S255, S257, and S288. The segment covering 290–308 (PKADDKERKNREREREREC) has biased composition (basic and acidic residues). S313 is subject to Phosphoserine. Residues 327-345 (SGRKIKGRGPRRYRTPSRS) show a composition bias toward basic residues. Composition is skewed to basic and acidic residues over residues 346 to 366 (RSRD…EMQR) and 377 to 447 (RWIK…DKYN). Phosphoserine is present on S354. T356 is modified (phosphothreonine). S384 carries the phosphoserine modification. K390 is covalently cross-linked (Glycyl lysine isopeptide (Lys-Gly) (interchain with G-Cter in SUMO2)). A phosphoserine mark is found at S395, S411, and S413. Basic residues predominate over residues 448–461 (KNKVKKRGKSKSRS). Basic and acidic residues-rich tracts occupy residues 462 to 552 (KSKE…DLTK) and 577 to 598 (RSHD…QEYR). The segment covering 599-625 (RRGRSRSRDRRTPGRSRSKDRRRRRRD) has biased composition (basic residues). Basic and acidic residues predominate over residues 626 to 684 (SRSSEREESQSRNKDKYRSQESKSSHRKENSEGEKRTYSKSRDHNSSSNNREKKADREQ). S685 and S688 each carry phosphoserine. Residues 685-705 (SPVSKTKQSSQDNEVKSSTLK) show a composition bias toward polar residues. K691 participates in a covalent cross-link: Glycyl lysine isopeptide (Lys-Gly) (interchain with G-Cter in SUMO2). Residues S694, S742, and S743 each carry the phosphoserine modification. Residues 706 to 752 (NQEDEKTRSPVEKENQKSKGQENDHVHDKNKKCDHESSPGTDEDKSG) show a composition bias toward basic and acidic residues. T746 carries the phosphothreonine modification. S751 is modified (phosphoserine).

Interacts with CLK1, PNN and with the phosphorylated C-terminal domain of RNA polymerase II.

It localises to the nucleus matrix. The protein localises to the nucleus speckle. The enzyme catalyses [protein]-peptidylproline (omega=180) = [protein]-peptidylproline (omega=0). Inhibited by cyclosporin A (CsA). PPIase that catalyzes the cis-trans isomerization of proline imidic peptide bonds in oligopeptides and may therefore assist protein folding. May be implicated in the folding, transport, and assembly of proteins. May play an important role in the regulation of pre-mRNA splicing. The sequence is that of Peptidyl-prolyl cis-trans isomerase G (Ppig) from Mus musculus (Mouse).